A 457-amino-acid chain; its full sequence is ATP synthase subunit beta (457 aa).

An ATP-binding site is contributed by 150-157 (GGAGVGKT).

It belongs to the ATPase alpha/beta chains family. F-type ATPases have 2 components, CF(1) - the catalytic core - and CF(0) - the membrane proton channel. CF(1) has five subunits: alpha(3), beta(3), gamma(1), delta(1), epsilon(1). CF(0) has three main subunits: a(1), b(2) and c(9-12). The alpha and beta chains form an alternating ring which encloses part of the gamma chain. CF(1) is attached to CF(0) by a central stalk formed by the gamma and epsilon chains, while a peripheral stalk is formed by the delta and b chains.

The protein localises to the cell membrane. The enzyme catalyses ATP + H2O + 4 H(+)(in) = ADP + phosphate + 5 H(+)(out). Its function is as follows. Produces ATP from ADP in the presence of a proton gradient across the membrane. The catalytic sites are hosted primarily by the beta subunits. The polypeptide is ATP synthase subunit beta (Baumannia cicadellinicola subsp. Homalodisca coagulata).